The chain runs to 65 residues: Large ribosomal subunit protein bL28 (65 aa).

The protein belongs to the bacterial ribosomal protein bL28 family.

The polypeptide is Large ribosomal subunit protein bL28 (Pseudothermotoga lettingae (strain ATCC BAA-301 / DSM 14385 / NBRC 107922 / TMO) (Thermotoga lettingae)).